Consider the following 338-residue polypeptide: UPF0194 membrane protein in asrC 5'region (338 aa).

Positions 1–23 (MAISPKKRALALVVVLIVAGAVA) are cleaved as a signal peptide. Residues 148–207 (KQSLDNAAAALKTARANLDRAQQALTLAIKGPRKEDIAAARQQLQADKAGLSLARRELTD) are a coiled coil.

The protein belongs to the UPF0194 family.

The protein localises to the periplasm. This is UPF0194 membrane protein in asrC 5'region from Acidithiobacillus ferridurans.